We begin with the raw amino-acid sequence, 477 residues long: tRNA-2-methylthio-N(6)-dimethylallyladenosine synthase (477 aa).

The MTTase N-terminal domain occupies 3–120; sequence KKLYIKTWGC…LPEMINELKG (118 aa). 6 residues coordinate [4Fe-4S] cluster: cysteine 12, cysteine 49, cysteine 83, cysteine 157, cysteine 161, and cysteine 164. A Radical SAM core domain is found at 143 to 375; that stretch reads RAEGPTAFVS…QQRITQQALR (233 aa). Residues 378-441 form the TRAM domain; sequence RHMVGTEQRI…TNSLRGEVVR (64 aa).

It belongs to the methylthiotransferase family. MiaB subfamily. In terms of assembly, monomer. The cofactor is [4Fe-4S] cluster.

Its subcellular location is the cytoplasm. It catalyses the reaction N(6)-dimethylallyladenosine(37) in tRNA + (sulfur carrier)-SH + AH2 + 2 S-adenosyl-L-methionine = 2-methylsulfanyl-N(6)-dimethylallyladenosine(37) in tRNA + (sulfur carrier)-H + 5'-deoxyadenosine + L-methionine + A + S-adenosyl-L-homocysteine + 2 H(+). Its function is as follows. Catalyzes the methylthiolation of N6-(dimethylallyl)adenosine (i(6)A), leading to the formation of 2-methylthio-N6-(dimethylallyl)adenosine (ms(2)i(6)A) at position 37 in tRNAs that read codons beginning with uridine. This is tRNA-2-methylthio-N(6)-dimethylallyladenosine synthase from Alteromonas mediterranea (strain DSM 17117 / CIP 110805 / LMG 28347 / Deep ecotype).